A 133-amino-acid polypeptide reads, in one-letter code: Ribonuclease VapC29 (133 aa).

Residues 3-122 form the PINc domain; the sequence is VLLDANVLIA…TLDSGLAHLH (120 aa). Residues D6 and D97 each contribute to the Mg(2+) site.

Belongs to the PINc/VapC protein family. The cofactor is Mg(2+).

In terms of biological role, toxic component of a type II toxin-antitoxin (TA) system. Its cognate antitoxin is VapB29. Has ribonuclease activity. In Mycobacterium tuberculosis (strain CDC 1551 / Oshkosh), this protein is Ribonuclease VapC29.